A 353-amino-acid polypeptide reads, in one-letter code: Basic membrane protein C (353 aa).

The signal sequence occupies residues 1–16 (MFKRFIFITLSLLVFA). Residue Cys17 is the site of N-palmitoyl cysteine attachment. Cys17 carries S-diacylglycerol cysteine lipidation.

This sequence belongs to the BMP lipoprotein family. In terms of assembly, monomer.

It localises to the cell inner membrane. Its function is as follows. May be part of an ABC-type nucleoside uptake system involved in the purine salvage pathway. The sequence is that of Basic membrane protein C (bmpC) from Borreliella burgdorferi (strain ATCC 35210 / DSM 4680 / CIP 102532 / B31) (Borrelia burgdorferi).